The chain runs to 997 residues: FIP1[III]-like protein (997 aa).

4 disordered regions span residues 250–272 (ITSN…LNSV), 289–475 (AGSF…ETEG), 534–553 (SRSS…KEED), and 880–900 (QGKV…TIEQ). The span at 261–272 (SHSYGSKDLNSV) shows a compositional bias: polar residues. 4 stretches are compositionally biased toward basic and acidic residues: residues 309-323 (TPSD…KEES), 334-346 (SVER…DRIR), 367-379 (ESLK…DQRE), and 388-404 (RLAE…EDSG). The Nuclear localization signal motif lies at 397-404 (IKRGEDSG). Residues 534–547 (SRSSFDLNQRNSRS) are compositionally biased toward polar residues. Positions 930-963 (EIIEEVKGVEIDNERIQESLKKMEKRRERFKGTK) form a coiled coil.

The protein belongs to the FIP1 family. In terms of assembly, component of the cleavage and polyadenylation specificity factor (CPSF) complex. Forms a complex with cleavage and polyadenylation specificity factor (CPSF) subunits CLPS5, FIPS5, PAPS4, PCFS1, CSTF64 and CPSF30.

It localises to the nucleus. Component of the cleavage and polyadenylation specificity factor (CPSF) complex that plays a key role in pre-mRNA 3'-end formation, recognizing the AAUAAA signal sequence and interacting with poly(A) polymerase and other factors to bring about cleavage and poly(A) addition. FIP1L1 contributes to poly(A) site recognition and stimulates poly(A) addition. Binds to U-rich RNA sequence elements surrounding the poly(A) site. May act to tether poly(A) polymerase to the CPSF complex. This Arabidopsis thaliana (Mouse-ear cress) protein is FIP1[III]-like protein.